We begin with the raw amino-acid sequence, 1049 residues long: Protein phosphatase 1 regulatory subunit 12A (1049 aa).

6 ANK repeats span residues 39 to 68 (DDGA…DINY), 72 to 101 (DGLT…CINQ), 105 to 134 (EGWI…SVGV), 138 to 164 (EGET…RQGV), 198 to 227 (SGGT…DVNI), and 231 to 260 (DGWT…DMDV). The disordered stretch occupies residues 302–947 (LIETTTTGDN…RPYSRFEKDD (646 aa)). A compositionally biased stretch (polar residues) spans 303–315 (IETTTTGDNNQSV). A compositionally biased stretch (basic and acidic residues) spans 319 to 341 (KSKETLLLEPEKTAPRIETLEPE). Positions 359–371 (SEEEEEEDSESEN) are enriched in acidic residues. The segment covering 378-421 (SSVPSSVSNSTPTTAPSSITVTSPTTPSNQVTTPTSPTKKVSTP) has biased composition (low complexity). Basic and acidic residues predominate over residues 426–436 (SPKEEDRKDES). Residues 473-484 (RSASSPRLSSSL) show a composition bias toward low complexity. The span at 485–497 (DNKDKEKEKEKTR) shows a compositional bias: basic and acidic residues. The span at 545-564 (SDGTASTNRTSSYQRSTSHT) shows a compositional bias: polar residues. Residues 571–592 (SSSRDLPAKSSSASSLEPNNSK) are compositionally biased toward low complexity. Residues 593–607 (AWQPSSYYQSYSIHR) are compositionally biased toward polar residues. A compositionally biased stretch (low complexity) spans 620-639 (SSTSSSTTTTTTTSSVTSPT). Over residues 649-664 (WAEESAEKEKEKEKES) the composition is skewed to basic and acidic residues. Over residues 665 to 686 (ATVIPTINTAGTTTTTSTTGTV) the composition is skewed to low complexity. The segment covering 702–711 (VRDEESESQR) has biased composition (basic and acidic residues). Basic residues predominate over residues 712 to 722 (KARSRQARQSR). Positions 747–789 (RPREDEKEEKEKQDKEKQEEKKETETKEDDYRSRYRSFEEKYR) are enriched in basic and acidic residues. The segment covering 790–819 (TSLASSTTASSTIPSSSSSSSSSLYSTSSL) has biased composition (low complexity). The segment covering 820 to 829 (NRPNSLTGLT) has biased composition (polar residues). Over residues 835–863 (STRDTDRESDRKEKDEDRDGDDKSQPRSI) the composition is skewed to basic and acidic residues. Residues 864–875 (RDRRRPREKRRS) are compositionally biased toward basic residues. Composition is skewed to basic and acidic residues over residues 890–906 (PDHP…EPQS) and 934–947 (GESR…EKDD).

As to quaternary structure, PP1 comprises a catalytic subunit, and one or several targeting or regulatory subunits. Ppp1r12a mediates binding to myosin.

The protein resides in the cytoplasm. Its function is as follows. Regulates myosin phosphatase activity. This is Protein phosphatase 1 regulatory subunit 12A (ppp1r12a) from Danio rerio (Zebrafish).